The chain runs to 240 residues: 1-(5-phosphoribosyl)-5-[(5-phosphoribosylamino)methylideneamino] imidazole-4-carboxamide isomerase 2 (240 aa).

Asp8 (proton acceptor) is an active-site residue. Residue Asp129 is the Proton donor of the active site.

It belongs to the HisA/HisF family.

The protein localises to the cytoplasm. The catalysed reaction is 1-(5-phospho-beta-D-ribosyl)-5-[(5-phospho-beta-D-ribosylamino)methylideneamino]imidazole-4-carboxamide = 5-[(5-phospho-1-deoxy-D-ribulos-1-ylimino)methylamino]-1-(5-phospho-beta-D-ribosyl)imidazole-4-carboxamide. It participates in amino-acid biosynthesis; L-histidine biosynthesis; L-histidine from 5-phospho-alpha-D-ribose 1-diphosphate: step 4/9. The protein is 1-(5-phosphoribosyl)-5-[(5-phosphoribosylamino)methylideneamino] imidazole-4-carboxamide isomerase 2 of Ruegeria sp. (strain TM1040) (Silicibacter sp.).